A 951-amino-acid chain; its full sequence is Leucine-rich repeat-containing G-protein coupled receptor 4 (951 aa).

The first 24 residues, 1–24, serve as a signal peptide directing secretion; it reads MPGPLRLLCFFALGLLGSAGPSGA. The region spanning 25–57 is the LRRNT domain; it reads APPLCAAPCSCDGDRRVDCSGKGLTAVPEGLSA. Residues 25 to 544 are Extracellular-facing; sequence APPLCAAPCS…LLGSWMIRLT (520 aa). Intrachain disulfides connect C29–C35 and C33–C43. LRR repeat units lie at residues 58 to 79, 82 to 103, 106 to 127, 130 to 151, 154 to 177, 178 to 199, 202 to 223, 226 to 247, 249 to 270, and 273 to 294; these read FTQALDISMNNITQLPEDAFKS, FLEELQLAGNDLSFIHPKALSG, ELKVLTLQNNQLRTVPSEAIHG, ALQSLRLDANHITSVPEDSFEG, QLRHLWLDDNSLTEVPVRPLSNLP, TLQALTLALNNISSIPDFAFTN, SLVVLHLHNNKIKSLSQHCFDG, NLETLDLNYNNLDEFPQAIKAL, SLKELGFHSNSISVIPDGAFGG, and LLRTIHLYDNPLSFVGNSAFHN. The N-linked (GlcNAc...) asparagine glycan is linked to N68. N-linked (GlcNAc...) asparagine glycans are attached at residues N188 and N199. 2 N-linked (GlcNAc...) asparagine glycosylation sites follow: N294 and N314. 5 LRR repeats span residues 320–341, 344–365, 366–387, 390–411, and 414–435; these read HLESLTLTGTKISSIPDDLCQN, MLRTLDLSYNNIRDLPSFNGCR, ALEEISLQRNQISLIKENTFQG, SLRILDLSRNLIREIHSGAFAK, and TITNLDVSFNELTSFPTEGLNG. C339 and C364 form a disulfide bridge. Disulfide bonds link C470–C522 and C471–C476. N-linked (GlcNAc...) asparagine glycosylation occurs at N505. Residues 545–565 form a helical membrane-spanning segment; it reads VWFIFLVALLFNLLVILTVFA. Over 566–575 the chain is Cytoplasmic; it reads SCSSLPASKL. The chain crosses the membrane as a helical span at residues 576-596; the sequence is FIGLISVSNLLMGIYTGILTF. The Extracellular portion of the chain corresponds to 597-619; it reads LDAVSWGRFAEFGIWWETGSGCK. C618 and C693 are disulfide-bonded. A helical membrane pass occupies residues 620-640; sequence VAGSLAVFSSESAVFLLTLAA. Residues 641–661 lie on the Cytoplasmic side of the membrane; that stretch reads VERSVFAKDLMKHGKSSHLRQ. Residues 662–682 traverse the membrane as a helical segment; that stretch reads FQVAALLALLGAAVAGCFPLF. At 683–703 the chain is on the extracellular side; that stretch reads HGGQYSASPLCLPFPTGETPS. A helical membrane pass occupies residues 704 to 724; sequence LGFTVTLVLLNSLAFLLMAII. Residues 725-756 are Cytoplasmic-facing; it reads YTKLYCNLEKEDLSENSQSSVIKHVAWLIFTN. Residues 757 to 777 form a helical membrane-spanning segment; sequence CIFFCPVAFFSFAPLITAISI. Over 778–783 the chain is Extracellular; the sequence is SPEIMK. A helical membrane pass occupies residues 784–804; sequence SVTLIFFPLPACLNPVLYVFF. The Cytoplasmic segment spans residues 805 to 951; that stretch reads NPKFKEDWKL…YAYNLQRVRD (147 aa). S920 carries the phosphoserine modification.

It belongs to the G-protein coupled receptor 1 family.

The protein localises to the cell membrane. In terms of biological role, receptor for R-spondins that potentiates the canonical Wnt signaling pathway and is involved in the formation of various organs. Upon binding to R-spondins (RSPO1, RSPO2, RSPO3 or RSPO4), associates with phosphorylated LRP6 and frizzled receptors that are activated by extracellular Wnt receptors, triggering the canonical Wnt signaling pathway to increase expression of target genes. In contrast to classical G-protein coupled receptors, does not activate heterotrimeric G-proteins to transduce the signal. Its function as activator of the Wnt signaling pathway is required for the development of various organs, including liver, kidney, intestine, bone, reproductive tract and eye. May also act as a receptor for norrin (NDP), such results however require additional confirmation in vivo. Required during spermatogenesis to activate the Wnt signaling pathway in peritubular myoid cells. Required for the maintenance of intestinal stem cells and Paneth cell differentiation in postnatal intestinal crypts. Acts as a regulator of bone formation and remodeling. Involved in kidney development; required for maintaining the ureteric bud in an undifferentiated state. Involved in the development of the anterior segment of the eye. Required during erythropoiesis. Also acts as a negative regulator of innate immunity by inhibiting TLR2/TLR4 associated pattern-recognition and pro-inflammatory cytokine production. Plays an important role in regulating the circadian rhythms of plasma lipids, partially through regulating the rhythmic expression of MTTP. Required for proper development of GnRH neurons (gonadotropin-releasing hormone expressing neurons) that control the release of reproductive hormones from the pituitary gland. In Rattus norvegicus (Rat), this protein is Leucine-rich repeat-containing G-protein coupled receptor 4 (Lgr4).